We begin with the raw amino-acid sequence, 20 residues long: Pregnancy-associated glycoprotein 57 (20 aa).

This sequence belongs to the peptidase A1 family. Glycosylated.

It is found in the secreted. This is Pregnancy-associated glycoprotein 57 from Ovis aries (Sheep).